The following is a 204-amino-acid chain: MRGTLYIVSASSGTGKSSIVNATLERDQQIALSISFTSRQPRPNERHAQHYYFVSADEFQRMIEAGDFFEYALVHGDWKGTARQSVEPQLAAGHDVLLEIDWQGARQVRSKIPDAISIFILPPSRAALEERLRKRGQDSEEVIHLRLAAAHEEMAHYDEFDYTIINEHFETAVSEMSAIFTASRLRRQTQKIRHANLIQTLLTP.

In terms of domain architecture, Guanylate kinase-like spans 3–181 (GTLYIVSASS…AVSEMSAIFT (179 aa)). 10–17 (ASSGTGKS) contributes to the ATP binding site.

This sequence belongs to the guanylate kinase family.

The protein localises to the cytoplasm. The enzyme catalyses GMP + ATP = GDP + ADP. In terms of biological role, essential for recycling GMP and indirectly, cGMP. This Xylella fastidiosa (strain Temecula1 / ATCC 700964) protein is Guanylate kinase.